Consider the following 202-residue polypeptide: ATP-dependent Clp protease proteolytic subunit 1 (202 aa).

Catalysis depends on serine 102, which acts as the Nucleophile. Residue histidine 127 is part of the active site.

The protein belongs to the peptidase S14 family. As to quaternary structure, fourteen ClpP subunits assemble into 2 heptameric rings which stack back to back to give a disk-like structure with a central cavity, resembling the structure of eukaryotic proteasomes.

Its subcellular location is the cytoplasm. The catalysed reaction is Hydrolysis of proteins to small peptides in the presence of ATP and magnesium. alpha-casein is the usual test substrate. In the absence of ATP, only oligopeptides shorter than five residues are hydrolyzed (such as succinyl-Leu-Tyr-|-NHMec, and Leu-Tyr-Leu-|-Tyr-Trp, in which cleavage of the -Tyr-|-Leu- and -Tyr-|-Trp bonds also occurs).. Functionally, cleaves peptides in various proteins in a process that requires ATP hydrolysis. Has a chymotrypsin-like activity. Plays a major role in the degradation of misfolded proteins. In Agrobacterium fabrum (strain C58 / ATCC 33970) (Agrobacterium tumefaciens (strain C58)), this protein is ATP-dependent Clp protease proteolytic subunit 1.